A 442-amino-acid polypeptide reads, in one-letter code: Cell division protein FtsA (442 aa).

This sequence belongs to the FtsA/MreB family. In terms of assembly, self-interacts. Interacts with FtsZ.

The protein resides in the cell inner membrane. Its function is as follows. Cell division protein that is involved in the assembly of the Z ring. May serve as a membrane anchor for the Z ring. This Rhizobium meliloti (strain 1021) (Ensifer meliloti) protein is Cell division protein FtsA.